Here is a 467-residue protein sequence, read N- to C-terminus: Acid phosphatase PHO12 (467 aa).

An N-terminal signal peptide occupies residues 1-17; it reads MLKSAVYSILAASLVNA. The Nucleophile role is filled by H75. N-linked (GlcNAc...) asparagine glycans are attached at residues N97, N162, N192, N250, and N315. D338 functions as the Proton donor in the catalytic mechanism. N-linked (GlcNAc...) asparagine glycosylation is found at N356, N390, N439, N445, and N461.

The protein belongs to the histidine acid phosphatase family. Post-translationally, glycosylated during secretion across the membrane.

The enzyme catalyses a phosphate monoester + H2O = an alcohol + phosphate. The polypeptide is Acid phosphatase PHO12 (PHO12) (Saccharomyces cerevisiae (strain ATCC 204508 / S288c) (Baker's yeast)).